Here is a 210-residue protein sequence, read N- to C-terminus: Proteasome subunit beta (210 aa).

Residues 1–9 (MIHDKVFKG) constitute a propeptide, removed in mature form; by autocatalysis. Threonine 10 (nucleophile) is an active-site residue.

Belongs to the peptidase T1B family. The 20S proteasome core is composed of 14 alpha and 14 beta subunits that assemble into four stacked heptameric rings, resulting in a barrel-shaped structure. The two inner rings, each composed of seven catalytic beta subunits, are sandwiched by two outer rings, each composed of seven alpha subunits. The catalytic chamber with the active sites is on the inside of the barrel. Has a gated structure, the ends of the cylinder being occluded by the N-termini of the alpha-subunits. Is capped at one or both ends by the proteasome regulatory ATPase, PAN.

The protein localises to the cytoplasm. It catalyses the reaction Cleavage of peptide bonds with very broad specificity.. With respect to regulation, the formation of the proteasomal ATPase PAN-20S proteasome complex, via the docking of the C-termini of PAN into the intersubunit pockets in the alpha-rings, triggers opening of the gate for substrate entry. Interconversion between the open-gate and close-gate conformations leads to a dynamic regulation of the 20S proteasome proteolysis activity. Its function is as follows. Component of the proteasome core, a large protease complex with broad specificity involved in protein degradation. The sequence is that of Proteasome subunit beta from Ferroglobus placidus (strain DSM 10642 / AEDII12DO).